We begin with the raw amino-acid sequence, 89 residues long: Conotoxin Bu5 (89 aa).

The signal sequence occupies residues 1–22 (MKLTCVLIVAVLFLTACQLATA). A propeptide spanning residues 23 to 49 (ENSREEQGYSAVRSSDQIQDSDLKLTK) is cleaved from the precursor. 3 disulfides stabilise this stretch: Cys51-Cys66, Cys58-Cys70, and Cys65-Cys79. Cys79 bears the Cysteine amide mark. The propeptide occupies 80–89 (GVSIDYYDSR).

Belongs to the conotoxin O1 superfamily. In terms of tissue distribution, expressed by the venom duct.

The protein localises to the secreted. This Conus bullatus (Bubble cone) protein is Conotoxin Bu5.